The sequence spans 60 residues: Large ribosomal subunit protein uL30 (60 aa).

The protein belongs to the universal ribosomal protein uL30 family. As to quaternary structure, part of the 50S ribosomal subunit.

The chain is Large ribosomal subunit protein uL30 from Flavobacterium johnsoniae (strain ATCC 17061 / DSM 2064 / JCM 8514 / BCRC 14874 / CCUG 350202 / NBRC 14942 / NCIMB 11054 / UW101) (Cytophaga johnsonae).